The sequence spans 77 residues: uncharacterized protein (77 aa).

The next 2 helical transmembrane spans lie at 3–23 (FNFIEFLGYMATFFVAASFLF) and 35–55 (IGAILFVIYSLIITAYPVALL).

It is found in the cell membrane. This is an uncharacterized protein from Haemophilus influenzae (strain ATCC 51907 / DSM 11121 / KW20 / Rd).